We begin with the raw amino-acid sequence, 248 residues long: 4-hydroxy-tetrahydrodipicolinate reductase (248 aa).

NAD(+) contacts are provided by residues 9-14 (GARGKV), 77-79 (GTT), and 104-107 (APNF). H134 acts as the Proton donor/acceptor in catalysis. A (S)-2,3,4,5-tetrahydrodipicolinate-binding site is contributed by H135. Residue K138 is the Proton donor of the active site. 144–145 (GT) contacts (S)-2,3,4,5-tetrahydrodipicolinate.

The protein belongs to the DapB family.

Its subcellular location is the cytoplasm. The enzyme catalyses (S)-2,3,4,5-tetrahydrodipicolinate + NAD(+) + H2O = (2S,4S)-4-hydroxy-2,3,4,5-tetrahydrodipicolinate + NADH + H(+). It carries out the reaction (S)-2,3,4,5-tetrahydrodipicolinate + NADP(+) + H2O = (2S,4S)-4-hydroxy-2,3,4,5-tetrahydrodipicolinate + NADPH + H(+). It functions in the pathway amino-acid biosynthesis; L-lysine biosynthesis via DAP pathway; (S)-tetrahydrodipicolinate from L-aspartate: step 4/4. Catalyzes the conversion of 4-hydroxy-tetrahydrodipicolinate (HTPA) to tetrahydrodipicolinate. In Nocardia farcinica (strain IFM 10152), this protein is 4-hydroxy-tetrahydrodipicolinate reductase.